A 220-amino-acid chain; its full sequence is Translation initiation factor 6 (220 aa).

Belongs to the eIF-6 family.

Functionally, binds to the 50S ribosomal subunit and prevents its association with the 30S ribosomal subunit to form the 70S initiation complex. The protein is Translation initiation factor 6 of Halobacterium salinarum (strain ATCC 29341 / DSM 671 / R1).